The following is a 421-amino-acid chain: BEN domain-containing protein 5 (421 aa).

An N6-acetyllysine modification is found at lysine 133. Positions 180–243 form a coiled coil; sequence RALYEELLRN…LNRRLQDVLL (64 aa). Lysine 258 participates in a covalent cross-link: Glycyl lysine isopeptide (Lys-Gly) (interchain with G-Cter in SUMO2). The BEN domain maps to 302–408; it reads GSGIWVDEEK…EKIMDINKSC (107 aa).

Functionally, acts as a transcriptional repressor. This is BEN domain-containing protein 5 (Bend5) from Mus musculus (Mouse).